A 204-amino-acid polypeptide reads, in one-letter code: Superoxide dismutase [Mn] (204 aa).

Position 27 (H27) interacts with Mn(2+). 2 positions are modified to phosphothreonine: T34 and T70. Mn(2+)-binding residues include H82, D164, and H168.

Belongs to the iron/manganese superoxide dismutase family. As to quaternary structure, homodimer. Mn(2+) serves as cofactor.

It catalyses the reaction 2 superoxide + 2 H(+) = H2O2 + O2. Destroys superoxide anion radicals which are normally produced within the cells and which are toxic to biological systems. In Geobacillus stearothermophilus (Bacillus stearothermophilus), this protein is Superoxide dismutase [Mn] (sodA).